Consider the following 1254-residue polypeptide: Protein transport protein Sec31A (1254 aa).

WD repeat units follow at residues 4–47, 64–111, 120–160, 166–206, 209–254, 258–298, and 301–341; these read KEIN…EIFE, SSPH…AGDS, KHTG…SPMT, QPQE…LIIK, DHSN…SPLK, NHTR…VLYE, and TSTQ…NDNA. The segment covering 364–383 has biased composition (low complexity); the sequence is TLPPLQLPQQTSPQSTITPL. Positions 364–386 are disordered; it reads TLPPLQLPQQTSPQSTITPLKKP. The WD 8; interaction with SEC13 repeat unit spans residues 397–428; that stretch reads SFAFGGKLVTLDNIKPTAQQPQQTAAHVVHIS. 3 disordered regions span residues 818-892, 983-1008, and 1058-1125; these read PMQT…QSPA, CFQH…GTQH, and PPAP…PGAP. Positions 832–846 are enriched in low complexity; it reads AQPAAPAVPPQYYQQ. Polar residues-rich tracts occupy residues 847-863 and 872-881; these read GRSA…TPTA and VPSSDPQGDS. A compositionally biased stretch (low complexity) spans 1080 to 1091; sequence QTLQPQQQVPDQ.

Belongs to the WD repeat SEC31 family. COPII is composed of at least 5 proteins: the SEC23/24 complex, the SEC13/31 complex and SAR1. SEC13 and SEC31 make a 2:2 tetramer that forms the edge element of the COPII outer coat. The tetramer self-assembles in multiple copies to form the complete polyhedral cage. Interacts (via WD 8) with SEC13.

It localises to the cytoplasm. It is found in the cytoplasmic vesicle. Its subcellular location is the COPII-coated vesicle membrane. The protein resides in the endoplasmic reticulum membrane. In terms of biological role, component of the coat protein complex II (COPII) which promotes the formation of transport vesicles from the endoplasmic reticulum (ER). The coat has two main functions, the physical deformation of the endoplasmic reticulum membrane into vesicles and the selection of cargo molecules. This chain is Protein transport protein Sec31A (sec31a), found in Danio rerio (Zebrafish).